A 237-amino-acid chain; its full sequence is Phosphoribosylaminoimidazole-succinocarboxamide synthase (237 aa).

The protein belongs to the SAICAR synthetase family.

The catalysed reaction is 5-amino-1-(5-phospho-D-ribosyl)imidazole-4-carboxylate + L-aspartate + ATP = (2S)-2-[5-amino-1-(5-phospho-beta-D-ribosyl)imidazole-4-carboxamido]succinate + ADP + phosphate + 2 H(+). Its pathway is purine metabolism; IMP biosynthesis via de novo pathway; 5-amino-1-(5-phospho-D-ribosyl)imidazole-4-carboxamide from 5-amino-1-(5-phospho-D-ribosyl)imidazole-4-carboxylate: step 1/2. The sequence is that of Phosphoribosylaminoimidazole-succinocarboxamide synthase from Deinococcus radiodurans (strain ATCC 13939 / DSM 20539 / JCM 16871 / CCUG 27074 / LMG 4051 / NBRC 15346 / NCIMB 9279 / VKM B-1422 / R1).